The sequence spans 1274 residues: Polycomb protein Sfmbt (1274 aa).

Positions 266–285 are disordered; the sequence is PSSKQMKGYRNSNSSGTSSA. The segment covering 267–278 has biased composition (polar residues); it reads SSKQMKGYRNSN. Residues 331–366 form an FCS-type zinc finger; it reads PIQKDGMAVCERCGAIGVKHTFYTKSRRFCSMACAR. Cys340, Cys343, Cys360, and Cys364 together coordinate Zn(2+). Positions 381-394 are enriched in low complexity; it reads TGATTSNNQSTSSS. Disordered regions lie at residues 381–401 and 488–510; these read TGAT…AASG and PGGE…SGYL. Over residues 494-509 the composition is skewed to polar residues; the sequence is GSGNDTSTPNTASSGY. MBT repeat units lie at residues 564–675, 683–781, 789–899, and 907–1003; these read YDWL…LIPP, KDWK…LAAP, LAGR…VTPP, and FTWE…LEGP. Disordered regions lie at residues 1007 to 1063 and 1083 to 1167; these read SYQQ…TTPH and YENN…NSSA. Basic residues predominate over residues 1019–1028; the sequence is KVPRKKKTKK. The span at 1038–1050 shows a compositional bias: low complexity; sequence AKQQNDNTQTTQT. Residues 1087–1114 show a composition bias toward acidic residues; the sequence is QPEDGDGDEEDPDPDADADLDADADGDG. Composition is skewed to polar residues over residues 1117-1128 and 1158-1167; these read STSHISEQSTTH and GNSNKMNSSA. In terms of domain architecture, SAM spans 1194 to 1258; that stretch reads WNVYDVSQFL…DLITQLKCKV (65 aa).

As to quaternary structure, interacts with pho as a component of the pho-repressive complex (PhoRC).

It is found in the nucleus. Functionally, polycomb group (PcG) protein that binds to the Polycomb response elements (PREs) found in the regulatory regions of many genes. PcG proteins act by forming multiprotein complexes, which are required to maintain the transcriptionally repressive state of homeotic genes throughout development. PcG proteins are not required to initiate repression, but to maintain it during later stages of development. They probably act via the methylation of histones, rendering chromatin heritably changed in its expressibility. Necessary but not sufficient to recruit a functional PcG repressive complex that represses target genes, suggesting that the recruitment of the distinct PRC1 complex is also required to allow a subsequent repression. This Drosophila pseudoobscura pseudoobscura (Fruit fly) protein is Polycomb protein Sfmbt.